Consider the following 99-residue polypeptide: UPF0473 protein Athe_1150 (99 aa).

This sequence belongs to the UPF0473 family.

The protein is UPF0473 protein Athe_1150 of Caldicellulosiruptor bescii (strain ATCC BAA-1888 / DSM 6725 / KCTC 15123 / Z-1320) (Anaerocellum thermophilum).